We begin with the raw amino-acid sequence, 507 residues long: Dihydrolipoyl dehydrogenase 2, mitochondrial (507 aa).

The transit peptide at 1–36 (MAMASLARRKAYFLTRNISNSPTDAFRFSFSLTRGF) directs the protein to the mitochondrion. FAD-binding positions include 73–82 (EKRGALGGTC), lysine 91, glycine 155, and 184–186 (TGS). A disulfide bond links cysteine 82 and cysteine 87. NAD(+)-binding positions include 221–228 (GAGYIGLE), glutamate 244, valine 278, and glycine 313. FAD is bound by residues aspartate 354 and 360 to 363 (MLAH). Histidine 486 serves as the catalytic Proton acceptor.

This sequence belongs to the class-I pyridine nucleotide-disulfide oxidoreductase family. In terms of assembly, homodimer. Part of both the glycine cleavage system composed of four proteins: P, T, L and H and of the pyruvate dehydrogenase complex containing multiple copies of three enzymatic components: pyruvate dehydrogenase (E1), dihydrolipoamide acetyltransferase (E2) and lipoamide dehydrogenase (E3). Requires FAD as cofactor. In terms of processing, S-nytrosylated at unknown positions. In terms of tissue distribution, preferentially expressed in roots, flowers and siliques and at a lower level in stems and leaves.

The protein resides in the mitochondrion matrix. The enzyme catalyses N(6)-[(R)-dihydrolipoyl]-L-lysyl-[protein] + NAD(+) = N(6)-[(R)-lipoyl]-L-lysyl-[protein] + NADH + H(+). Functionally, lipoamide dehydrogenase is a component of the glycine decarboxylase (GDC) or glycine cleavage system as well as of the alpha-ketoacid dehydrogenase complexes. LPD1 is probably the protein most often associated with the glycine decarboxylase complex while LPD2 is probably incorporated into alpha-ketoacid dehydrogenase complexes. The polypeptide is Dihydrolipoyl dehydrogenase 2, mitochondrial (LPD2) (Arabidopsis thaliana (Mouse-ear cress)).